The following is a 229-amino-acid chain: Ras-related protein RabZ (229 aa).

The disordered stretch occupies residues 1 to 39; it reads MGCFHSREPTATGKTKKEEPTSAVKTNKEEKSSNYVSEP. Glycine 2 carries N-myristoyl glycine lipidation. A lipid anchor (S-palmitoyl cysteine) is attached at cysteine 3. Residues 15-32 are compositionally biased toward basic and acidic residues; sequence TKKEEPTSAVKTNKEEKS. 57–64 is a GTP binding site; sequence GDQATGKS. An Effector region motif is present at residues 79-88; it reads HKPSPIIIDC. GTP contacts are provided by residues 106–110 and 164–167; these read DTAGQ and NKCD.

The protein belongs to the small GTPase superfamily. Rab family. Although this sequence lacks the C-terminal cysteine motifs subject to isoprenylation in other Rab proteins, it does have N-terminal myristoylation and S-palmitoylation sequence motifs.

The polypeptide is Ras-related protein RabZ (rabZ) (Dictyostelium discoideum (Social amoeba)).